Reading from the N-terminus, the 149-residue chain is 3-hydroxyacyl-[acyl-carrier-protein] dehydratase FabZ (149 aa).

Residue His53 is part of the active site.

The protein belongs to the thioester dehydratase family. FabZ subfamily.

The protein resides in the cytoplasm. It carries out the reaction a (3R)-hydroxyacyl-[ACP] = a (2E)-enoyl-[ACP] + H2O. Involved in unsaturated fatty acids biosynthesis. Catalyzes the dehydration of short chain beta-hydroxyacyl-ACPs and long chain saturated and unsaturated beta-hydroxyacyl-ACPs. This Neisseria meningitidis serogroup C / serotype 2a (strain ATCC 700532 / DSM 15464 / FAM18) protein is 3-hydroxyacyl-[acyl-carrier-protein] dehydratase FabZ.